Here is a 162-residue protein sequence, read N- to C-terminus: Functional amyloid chaperone FapA (162 aa).

The N-terminal stretch at 1–28 is a signal peptide; that stretch reads MSGSSLRIVVPALLVIVGSVPVSLPAHA.

Belongs to the FapA family. Monomer in solution. Interacts with FapC but not FapB in vitro.

The protein resides in the periplasm. An intrinsically disordered chaperone for fibril amyloid FapC that guards against fibrillation within the periplasm. Upon overexpression of the endogenous six-gene locus (fapA-fapF), cells form large clumps during liquid growth, make large amounts of biofilm and produce amyloid fibrils. This is Functional amyloid chaperone FapA from Pseudomonas aeruginosa (strain ATCC 15692 / DSM 22644 / CIP 104116 / JCM 14847 / LMG 12228 / 1C / PRS 101 / PAO1).